The sequence spans 158 residues: Ribosome maturation factor RimP (158 aa).

The protein belongs to the RimP family.

The protein localises to the cytoplasm. Functionally, required for maturation of 30S ribosomal subunits. The sequence is that of Ribosome maturation factor RimP from Lactiplantibacillus plantarum (strain ATCC BAA-793 / NCIMB 8826 / WCFS1) (Lactobacillus plantarum).